Here is a 293-residue protein sequence, read N- to C-terminus: MRFSLALAAAGLAQTAFAAPQPSRGFGCGAPEPSEELLQVSQQFAVEEAQALAESYRSGNLTARDVTAQAISVKVYIHVVAASTALSGGYLTDTMINNQFSVLQSAFAPYGISFTLAGTDKTVNANWADDSKGYEMTMKRALRKGTYKDLNLYFLQKMGGNLGYCYFPTTASPGSTAYIRDGCTILYSTTPGGSSTNYNLGHTATHEVGHWFGLYHTFQGGCTGAGDSVSDTPAQASASSGCPVGRDSCPSQAGVDPIHNYMDYSIDSCYEEFTPGQQTRINSFWTSYRQNAS.

A signal peptide spans 1–18 (MRFSLALAAAGLAQTAFA). An N-linked (GlcNAc...) asparagine glycan is attached at N60. Residue H206 participates in Zn(2+) binding. Residue E207 is part of the active site. H210 serves as a coordination point for Zn(2+). A disulfide bridge connects residues C242 and C269.

This sequence belongs to the peptidase M43B family.

It is found in the secreted. Functionally, secreted metalloproteinase that allows assimilation of proteinaceous substrates. This Podospora anserina (strain S / ATCC MYA-4624 / DSM 980 / FGSC 10383) (Pleurage anserina) protein is Extracellular metalloprotease PODANS_2_14170.